The primary structure comprises 66 residues: Large ribosomal subunit protein bL33 (66 aa).

Belongs to the bacterial ribosomal protein bL33 family.

The chain is Large ribosomal subunit protein bL33 from Synechococcus sp. (strain CC9311).